The primary structure comprises 251 residues: Triosephosphate isomerase 1 (251 aa).

9 to 11 serves as a coordination point for substrate; it reads NWK. Histidine 95 serves as the catalytic Electrophile. The active-site Proton acceptor is the glutamate 167. Residues glycine 173, serine 213, and 234–235 contribute to the substrate site; that span reads GG.

The protein belongs to the triosephosphate isomerase family. Homodimer.

The protein localises to the cytoplasm. The enzyme catalyses D-glyceraldehyde 3-phosphate = dihydroxyacetone phosphate. It participates in carbohydrate biosynthesis; gluconeogenesis. Its pathway is carbohydrate degradation; glycolysis; D-glyceraldehyde 3-phosphate from glycerone phosphate: step 1/1. Involved in the gluconeogenesis. Catalyzes stereospecifically the conversion of dihydroxyacetone phosphate (DHAP) to D-glyceraldehyde-3-phosphate (G3P). This chain is Triosephosphate isomerase 1, found in Listeria monocytogenes serovar 1/2a (strain ATCC BAA-679 / EGD-e).